Reading from the N-terminus, the 300-residue chain is Acetylglutamate kinase (300 aa).

Substrate contacts are provided by residues 73–74 (GG), R95, and N197.

The protein belongs to the acetylglutamate kinase family. ArgB subfamily.

It localises to the cytoplasm. It carries out the reaction N-acetyl-L-glutamate + ATP = N-acetyl-L-glutamyl 5-phosphate + ADP. Its pathway is amino-acid biosynthesis; L-arginine biosynthesis; N(2)-acetyl-L-ornithine from L-glutamate: step 2/4. Its function is as follows. Catalyzes the ATP-dependent phosphorylation of N-acetyl-L-glutamate. This Bordetella pertussis (strain Tohama I / ATCC BAA-589 / NCTC 13251) protein is Acetylglutamate kinase.